Here is a 192-residue protein sequence, read N- to C-terminus: Late embryogenesis abundant protein 47 (192 aa).

A Nuclear localization signal (NLS) motif is present at residues 5–9; it reads QLQKP. 2 consecutive SMP domains span residues 68–125 and 133–190; these read ITIG…LNAR and TTLA…RINQ. The segment at 146-174 is disordered; the sequence is LPSDKAATRKDAEGVTGAEMRNDPHLTTY. Residues 147 to 158 show a composition bias toward basic and acidic residues; it reads PSDKAATRKDAE.

This sequence belongs to the LEA type SMP family.

It is found in the cytoplasm. Its subcellular location is the nucleus. LEA proteins are late embryonic proteins abundant in higher plant seed embryos. The function of those proteins is not known. This Arabidopsis thaliana (Mouse-ear cress) protein is Late embryogenesis abundant protein 47.